Reading from the N-terminus, the 298-residue chain is GTP cyclohydrolase FolE2 (298 aa).

Belongs to the GTP cyclohydrolase IV family.

The catalysed reaction is GTP + H2O = 7,8-dihydroneopterin 3'-triphosphate + formate + H(+). It functions in the pathway cofactor biosynthesis; 7,8-dihydroneopterin triphosphate biosynthesis; 7,8-dihydroneopterin triphosphate from GTP: step 1/1. Converts GTP to 7,8-dihydroneopterin triphosphate. The polypeptide is GTP cyclohydrolase FolE2 (Xylella fastidiosa (strain 9a5c)).